The following is a 113-amino-acid chain: Retrotransposon Gag-like protein 8 (113 aa).

Belongs to the FAM127 family.

The protein is Retrotransposon Gag-like protein 8 (RTL8A) of Bos taurus (Bovine).